We begin with the raw amino-acid sequence, 250 residues long: 5'/3'-nucleotidase SurE (250 aa).

Asp-9, Asp-10, Ser-40, and Asn-93 together coordinate a divalent metal cation.

Belongs to the SurE nucleotidase family. The cofactor is a divalent metal cation.

The protein resides in the cytoplasm. The catalysed reaction is a ribonucleoside 5'-phosphate + H2O = a ribonucleoside + phosphate. The enzyme catalyses a ribonucleoside 3'-phosphate + H2O = a ribonucleoside + phosphate. It catalyses the reaction [phosphate](n) + H2O = [phosphate](n-1) + phosphate + H(+). In terms of biological role, nucleotidase with a broad substrate specificity as it can dephosphorylate various ribo- and deoxyribonucleoside 5'-monophosphates and ribonucleoside 3'-monophosphates with highest affinity to 3'-AMP. Also hydrolyzes polyphosphate (exopolyphosphatase activity) with the preference for short-chain-length substrates (P20-25). Might be involved in the regulation of dNTP and NTP pools, and in the turnover of 3'-mononucleotides produced by numerous intracellular RNases (T1, T2, and F) during the degradation of various RNAs. The sequence is that of 5'/3'-nucleotidase SurE from Yersinia enterocolitica serotype O:8 / biotype 1B (strain NCTC 13174 / 8081).